A 557-amino-acid chain; its full sequence is NAD(P)H-quinone oxidoreductase chain 4 (557 aa).

The next 14 membrane-spanning stretches (helical) occupy residues 25–45 (FPWL…VPFI), 57–77 (YALF…LKGF), 111–131 (LILL…PVSF), 133–153 (PKLF…VFAV), 157–177 (LLFF…LAIW), 189–209 (FIIY…AMGF), 230–250 (GFQL…LPIV), 264–284 (TAPV…YALL), 298–318 (FAPL…LTSF), 327–347 (IAYS…SFST), 353–373 (AMLQ…LVGA), 397–417 (FALW…SGFV), 438–458 (IVIA…LLSM), and 485–505 (IYII…PRIM).

It belongs to the complex I subunit 4 family.

The protein resides in the cellular thylakoid membrane. It catalyses the reaction a plastoquinone + NADH + (n+1) H(+)(in) = a plastoquinol + NAD(+) + n H(+)(out). The catalysed reaction is a plastoquinone + NADPH + (n+1) H(+)(in) = a plastoquinol + NADP(+) + n H(+)(out). NDH-1 shuttles electrons from NAD(P)H, via FMN and iron-sulfur (Fe-S) centers, to quinones in the respiratory chain. The immediate electron acceptor for the enzyme in this species is believed to be plastoquinone. Couples the redox reaction to proton translocation (for every two electrons transferred, four hydrogen ions are translocated across the cytoplasmic membrane), and thus conserves the redox energy in a proton gradient. This is NAD(P)H-quinone oxidoreductase chain 4 from Prochlorococcus marinus (strain SARG / CCMP1375 / SS120).